A 150-amino-acid polypeptide reads, in one-letter code: Developmental pluripotency-associated protein 3 (150 aa).

Over residues 1–22 (MEEPSEKVDPMKDPETPQKKDE) the composition is skewed to basic and acidic residues. Positions 1 to 32 (MEEPSEKVDPMKDPETPQKKDEEDALDDTDVL) are disordered. Residues 1 to 75 (MEEPSEKVDP…VPVENKSEKI (75 aa)) are required for H3K9me2-binding. The interval 76–150 (RREVQSAFPK…PSENAKIGKN (75 aa)) is required to exclude TET3 from the maternal pronucleus.

Expressed in the immature oocytes and in newborn ovaries. Subsequently detected in maturing oocytes and in preimplantation embryos. Expressed in pluripotent embryonic but not in differentiated somatic cells. Expressed in blastocysts, epiblasts, primordial germ cells, embryonic gonads and primitive spermatogonia. No expression is detected in adult testes.

The protein resides in the nucleus. The protein localises to the cytoplasm. Its function is as follows. Primordial germ cell (PGCs)-specific protein involved in epigenetic chromatin reprogramming in the zygote following fertilization. In zygotes, DNA demethylation occurs selectively in the paternal pronucleus before the first cell division, while the adjacent maternal pronucleus and certain paternally-imprinted loci are protected from this process. Participates in protection of DNA methylation in the maternal pronucleus by preventing conversion of 5mC to 5hmC: specifically recognizes and binds histone H3 dimethylated at 'Lys-9' (H3K9me2) on maternal genome, and protects maternal genome from TET3-mediated conversion to 5hmC and subsequent DNA demethylation. Does not bind paternal chromatin, which is mainly packed into protamine and does not contain much H3K9me2 mark. Also protects imprinted loci that are marked with H3K9me2 in mature sperm from DNA demethylation in early embryogenesis. May be important for the totipotent/pluripotent states continuing through preimplantation development. Also involved in chromatin condensation in oocytogenesis. This Mus musculus (Mouse) protein is Developmental pluripotency-associated protein 3 (Dppa3).